Consider the following 30-residue polypeptide: Brevinin-2Rg (30 aa).

Cys24 and Cys30 are joined by a disulfide.

In terms of tissue distribution, expressed by the skin glands.

Its subcellular location is the secreted. Functionally, antimicrobial peptide. This Pelophylax ridibundus (Marsh frog) protein is Brevinin-2Rg.